A 232-amino-acid chain; its full sequence is MTENAVLQLRAERIARATRPFLARGNRVRRCQRCLLPEKLCLCSTITPAQAKSRFCLLMFDTEPMKPSNTGRLIADILPDTVAFQWSRTEPSQDLLELVQNPDYQPMVVFPASYADEQREVIFTPPAGKPPLFIMLDGTWPEARKMFRKSPYLDNLPVISVDLSRLSAYRLREAQAEGQYCTAEVAIALLDMAGDTGAAAGLGEHFTRFKTRYLAGKTQHLGSITAEQLESV.

Zn(2+) contacts are provided by cysteine 31, cysteine 34, cysteine 41, and cysteine 43. The short motif at 137–140 is the DXTW element; it reads DGTW.

This sequence belongs to the TDD superfamily. DTWD2 family. TapT subfamily. In terms of assembly, monomer in solution.

It carries out the reaction a uridine in tRNA + S-adenosyl-L-methionine = a 3-[(3S)-3-amino-3-carboxypropyl]uridine in tRNA + S-methyl-5'-thioadenosine + H(+). The enzyme catalyses uridine(47) in tRNA(Phe) + S-adenosyl-L-methionine = 3-[(3S)-3-amino-3-carboxypropyl]uridine(47) in tRNA(Phe) + S-methyl-5'-thioadenosine + H(+). Its activity is regulated as follows. The degree of the acp3U modification at U47 is dependent on the presence of the m7G modification at the preceding nucleotide G46. It also depends on medium conditions. In terms of biological role, catalyzes the formation of 3-(3-amino-3-carboxypropyl)uridine (acp3U) at position 47 of tRNAs. Acp3U47 confers thermal stability on tRNA. The polypeptide is tRNA-uridine aminocarboxypropyltransferase (Escherichia coli (strain K12)).